The primary structure comprises 209 residues: Large ribosomal subunit protein uL3 (209 aa).

Residues alanine 132–glycine 153 form a disordered region. The residue at position 150 (glutamine 150) is an N5-methylglutamine.

It belongs to the universal ribosomal protein uL3 family. As to quaternary structure, part of the 50S ribosomal subunit. Forms a cluster with proteins L14 and L19. Methylated by PrmB.

Its function is as follows. One of the primary rRNA binding proteins, it binds directly near the 3'-end of the 23S rRNA, where it nucleates assembly of the 50S subunit. This Enterobacter sp. (strain 638) protein is Large ribosomal subunit protein uL3.